Consider the following 158-residue polypeptide: Large ribosomal subunit protein uL16 (158 aa).

This sequence belongs to the universal ribosomal protein uL16 family. As to quaternary structure, part of the 50S ribosomal subunit.

Its function is as follows. Binds 23S rRNA and is also seen to make contacts with the A and possibly P site tRNAs. This Prochlorococcus marinus (strain MIT 9303) protein is Large ribosomal subunit protein uL16.